The sequence spans 184 residues: Dynactin subunit 6 (184 aa).

It belongs to the dynactin subunits 5/6 family. Dynactin subunit 6 subfamily. As to quaternary structure, subunit of dynactin, a multiprotein complex part of a tripartite complex with dynein and a adapter, such as BICDL1, BICD2 or HOOK3. The dynactin complex is built around ACTR1A/ACTB filament and consists of an actin-related filament composed of a shoulder domain, a pointed end and a barbed end.

The protein localises to the cytoplasm. It localises to the cytoskeleton. Part of the dynactin complex that activates the molecular motor dynein for ultra-processive transport along microtubules. The polypeptide is Dynactin subunit 6 (dctn6) (Nematostella vectensis (Starlet sea anemone)).